We begin with the raw amino-acid sequence, 462 residues long: MKFLSSLVVLGLSAQALASPYVDHQATKDQRDVNVFKQVLQDINLDVQKFDQDITQYQGGDPTVLLADSDAIIKTTEEGIQRIGPQPPLSVTEALALVGPVQGVNKLIMKAVDHLIEKKGPLVGGGYGPQVKDSLERQAHAASKLSELVSSKVPSPLAPISKQLSDQVAQALQKGIQAFSISARQATKVKREATKVQRDISAFKKVIQNISLAVNKFNVDIERYVGGDASHLLADGNVLIKATLDGVQSLQNEPPLSSMEALALVGPVQDLSNQILLAIQNLIDKKEPLVQAGFGGKVENNLRQQEEAAQKLSELVSTKVPHELADISRQLSDGIAAGIKKGIDAFAGTGPAPTTSSTPEASTAPAPSTPPQTPEDTLVPATSTPAPGPAPTAPDSSMVWPTSTTASPDVQPTITSSGTSVPAAPTGGNSSPAVPAFTGAASANQVSGAVGLAAGLLAVLAF.

An N-terminal signal peptide occupies residues 1-18 (MKFLSSLVVLGLSAQALA). Position 313 (Ser313) interacts with hexadecanoate. The disordered stretch occupies residues 346-429 (FAGTGPAPTT…SVPAAPTGGN (84 aa)). A compositionally biased stretch (low complexity) spans 347-366 (AGTGPAPTTSSTPEASTAPA). Positions 399-420 (VWPTSTTASPDVQPTITSSGTS) are enriched in polar residues.

Belongs to the cell wall mannoprotein 1 family. In terms of assembly, monomer. In terms of processing, mannoprotein, glycosylated.

The protein resides in the secreted. The protein localises to the cell wall. Functionally, constitutive protein of the cell wall. Binds fatty acids and may thus serve as a fatty acid transporter between P.marneffei and host cells during infection. Abundant antigen target of host humoral immune response. The polypeptide is Cell wall mannoprotein 1 (Talaromyces marneffei (Penicillium marneffei)).